The primary structure comprises 410 residues: Arginine deiminase (410 aa).

Residue C400 is the Amidino-cysteine intermediate of the active site.

Belongs to the arginine deiminase family.

It is found in the cytoplasm. It carries out the reaction L-arginine + H2O = L-citrulline + NH4(+). It participates in amino-acid degradation; L-arginine degradation via ADI pathway; carbamoyl phosphate from L-arginine: step 1/2. This is Arginine deiminase from Bacillus cytotoxicus (strain DSM 22905 / CIP 110041 / 391-98 / NVH 391-98).